Consider the following 491-residue polypeptide: Myocilin (491 aa).

The N-terminal stretch at 1–18 (MPAVQLLLLACPVWDVGA) is a signal peptide. Residue Asn-43 is glycosylated (N-linked (GlcNAc...) asparagine). Residues 98–171 (QETPEGLQRE…QEVARLRRGQ (74 aa)) adopt a coiled-coil conformation. The disordered stretch occupies residues 151–189 (ENLARRLESSSQEVARLRRGQCPQTRDTARDVPPGSREV). In terms of domain architecture, Olfactomedin-like spans 231–490 (GCGELVWVGE…MVTYDIKLSK (260 aa)). Cys-232 and Cys-420 are disulfide-bonded. Residues Asp-367, Asn-415, Ala-416, Ile-464, and Asp-465 each contribute to the Ca(2+) site.

As to quaternary structure, homodimer (via N-terminus). Can also form higher oligomers. Interacts with OLFM3, FN1, NRCAM, GLDN and NFASC. Interacts (via N-terminus) with MYL2. Interacts with SFRP1, FRZB, FZD7, FZD10, FZD1 and WIF1; regulates Wnt signaling. Interacts with SNTA1; regulates muscle hypertrophy. Interacts with ERBB2 and ERBB3; activates ERBB2-ERBB3 signaling pathway. Interacts with SNCG; affects its secretion and its aggregation. Post-translationally, palmitoylated. In terms of processing, undergoes a calcium-dependent proteolytic cleavage at Arg-213 by CAPN2 in the endoplasmic reticulum. The result is the production of two fragments, one of 35 kDa containing the C-terminal olfactomedin-like domain, and another of 20 kDa containing the N-terminal leucine zipper-like domain. Glycosylated.

It is found in the secreted. The protein resides in the golgi apparatus. The protein localises to the cytoplasmic vesicle. Its subcellular location is the extracellular space. It localises to the extracellular matrix. It is found in the extracellular exosome. The protein resides in the mitochondrion. The protein localises to the mitochondrion intermembrane space. Its subcellular location is the mitochondrion inner membrane. It localises to the mitochondrion outer membrane. It is found in the rough endoplasmic reticulum. The protein resides in the cell projection. The protein localises to the cilium. Its subcellular location is the endoplasmic reticulum. Functionally, secreted glycoprotein regulating the activation of different signaling pathways in adjacent cells to control different processes including cell adhesion, cell-matrix adhesion, cytoskeleton organization and cell migration. Promotes substrate adhesion, spreading and formation of focal contacts. Negatively regulates cell-matrix adhesion and stress fiber assembly through Rho protein signal transduction. Modulates the organization of actin cytoskeleton by stimulating the formation of stress fibers through interactions with components of Wnt signaling pathways. Promotes cell migration through activation of PTK2 and the downstream phosphatidylinositol 3-kinase signaling. Plays a role in bone formation and promotes osteoblast differentiation in a dose-dependent manner through mitogen-activated protein kinase signaling. Mediates myelination in the peripheral nervous system through ERBB2/ERBB3 signaling. Plays a role as a regulator of muscle hypertrophy through the components of dystrophin-associated protein complex. Involved in positive regulation of mitochondrial depolarization. Plays a role in neurite outgrowth. May participate in the obstruction of fluid outflow in the trabecular meshwork. This Macaca fascicularis (Crab-eating macaque) protein is Myocilin (MYOC).